The chain runs to 395 residues: Na(+)/H(+) antiporter NhaA (395 aa).

Helical transmembrane passes span 15-35 (FLGS…AGFV), 66-86 (IDAW…ILEI), 101-121 (VALP…TYLL), 132-152 (GWAI…LALG), 161-181 (AWLM…IAVF), 184-204 (NALY…LIGA), 219-239 (CILL…AGVI), 265-285 (ALTP…NVGV), 301-321 (LGIM…ATLL), 339-359 (VFGL…IANL), and 366-386 (LVIP…LAGW).

It belongs to the NhaA Na(+)/H(+) (TC 2.A.33) antiporter family.

It is found in the cell inner membrane. It catalyses the reaction Na(+)(in) + 2 H(+)(out) = Na(+)(out) + 2 H(+)(in). Na(+)/H(+) antiporter that extrudes sodium in exchange for external protons. The polypeptide is Na(+)/H(+) antiporter NhaA (Gluconacetobacter diazotrophicus (strain ATCC 49037 / DSM 5601 / CCUG 37298 / CIP 103539 / LMG 7603 / PAl5)).